The sequence spans 108 residues: Movement protein (108 aa).

Residues 1–25 (MDASSQYSALPYPQPPRVPSAAPSA) are disordered. Residues 35-55 (EIVIFTFVSVLALYLLWLWVL) traverse the membrane as a helical segment. Residues 73–108 (LIFGPGERPPVASADGSRPVPDPSPPVRRDLDLSRV) are disordered. Positions 99–108 (VRRDLDLSRV) are enriched in basic and acidic residues.

The protein belongs to the mastrevirus movement protein family. As to quaternary structure, interacts with the capsid protein (CP). Part of a MP-CP-viral DNA complex.

Its subcellular location is the host membrane. Its function is as follows. Involved in the viral transport within, and between cells. The protein is Movement protein of Megathyrsus maximus (PanSV).